Here is a 162-residue protein sequence, read N- to C-terminus: Nucleotide-binding protein ABSDF0503 (162 aa).

This sequence belongs to the YajQ family.

In terms of biological role, nucleotide-binding protein. The sequence is that of Nucleotide-binding protein ABSDF0503 from Acinetobacter baumannii (strain SDF).